The chain runs to 1764 residues: MRAPTTVRCSGRIQRARWRGFLPLVLALLMGTSHAQRDSVGRYEPASRDANRLWRPVGNHPAAAAAKVYSLFREPDAPVPGLSPSEWNQPGQGIPGRLAEAEARRPSRAQQLRRVQSPVQTRRSNPRGQQPPAARTAHSVVRLATPQRPAAARRGRLTGRNVCGGQCCPGWTTSNSTNHCIKPVCQPPCQNRGSCSRPQLCICRSGFRGARCEEVIPEEEFDPQNARPVPRRSVEGAPGPHRSSEARGSLVTRIQPLLPPLPPPPSRTLSQTRPLQQHAGLSRTVRRYPATGTNGQLMSNALPSGPGPELRDSSQQAAHMNHLSHPWGLNLTEKIKKIKVVFTPTICKQTCARGRCANTCEKGDTTTLYSQGGHGHDPKSGFRIYFCQIPCLNGGRCIGRDECWCPANSTGKFCHLPVPQPDREPPGRGSQHRALLEGPLKQSTFTLPLSNQLASVNPSLVKVQMQHPPEASVQIHQVARVRGEVDPVPEDNSVETRASHRPHGSSGHSHWASNSIPARAGEAPRPPPVPSRHYGLLGQCYLSTVNGQCANPLGELTSQEDCCGSVGTSWGVTSCAPCPPRPAFPVIENGQLECPQGYKRLNLSHCQDINECLTLGLCKDSECVNTRGSYLCTCRPGLMLDPSRSRCVSDKAVSMKQGLCYRSMVSGTCTLPLVQRITKQICCCSRVGKAWGSKCEHCPLPGTEAFREICPAGHGYAYSSSDIRLSMRKAEEEELASPVREQRQQSSGPPPGAAERQPLRAATATWIEAETLPDKGDSRAIQITTSAPHLPARVPGDATGRPTPSLPGQGIPEGPAEEQVIPSSDVLVTHGPPGFDPCFAGASNICGPGTCVKLPNGYRCVCSPGYQLHPSQDYCTDDNECLRNPCEGRGRCVNSVGSYSCLCYPGYTLATLGDTQECQDVDECEQPGVCSGGRCSNTEGSYHCECDQGYVMVRRGHCQDINECRHPGTCPDGRCVNSPGSYTCLACEEGYIGQSGNCVDMNECLTPGICAHGRCINMEGSFRCSCEPGYELTPDKKGCRDVDECASRASCPTGLCLNTEGSFTCSACQSGYWVNEDGTACEDLDECAFPGVCPTGVCTNTVGSFSCKDCDRGFRPSPLGNSCEDVDECEGPQNSCLGGECKNTDGSYQCLCPQGFQLANGTVCEDVDECVGEEHCAPHGECLNSPGSFFCLCAPGFASAEGGTRCQDVDECATTEPCLGGHCVNTEGSFNCLCETGFQPAPDSGECVDIDECANDTVCGNHGFCDNTDGSFRCLCDQGFETSPSGWECVDVNECELMLAVCGDALCENVEGSFLCLCASDLEEYDAEEGHCRPRVAGAQRIPEVPTEEQAAGLTGMECYAEHNGGPPCSQILGQNSTQAECCSTQGARWGETCDPCPSEDSVEFSELCPSGQGYIPVEGAWTFGQAMYTDADECILFGPALCQNGRCLNTVPGYICLCNPGYHYDAVSRKCQDHNECQDLACENGECVNTEGSFHCFCSPPLILDLSGQRCVNSTSSSEDFPDHDIHMDICWKKVTNDVCSQPLRGHHTTYTECCCQDGEAWSQQCALCPPRSSEVYAQLCNVARIEAEREAGIHFRPGYEYGPGPDDLPETLYGPDGAPFYNYLGPEDTVPEPPFSNTASHLGDNTPILEPPLQPSELQPPAIQNPLASFEGLQAEECGILNGCENGRCVRVREGYTCDCFEGFQLDTALMACVDVNECEDLNGAARLCAHGHCENTEGSYRCHCSPGYVAEPGPPHCAAKE.

Residues 1–35 (MRAPTTVRCSGRIQRARWRGFLPLVLALLMGTSHA) form the signal peptide. Residues 80 to 140 (PGLSPSEWNQ…PPAARTAHSV (61 aa)) form a disordered region. A heparin-binding region spans residues 94–115 (IPGRLAEAEARRPSRAQQLRRV). A compositionally biased stretch (polar residues) spans 108-128 (RAQQLRRVQSPVQTRRSNPRG). N-linked (GlcNAc...) asparagine glycosylation occurs at N175. An EGF-like 1 domain is found at 181–213 (IKPVCQPPCQNRGSCSRPQLCICRSGFRGARCE). 3 disulfide bridges follow: C185–C195, C189–C201, and C203–C212. Residues 220–279 (EFDPQNARPVPRRSVEGAPGPHRSSEARGSLVTRIQPLLPPLPPPPSRTLSQTRPLQQHA) are disordered. Residues 226–243 (ARPVPRRSVEGAPGPHRS) are heparin-binding. Pro residues predominate over residues 257–266 (LLPPLPPPPS). N330 carries N-linked (GlcNAc...) asparagine glycosylation. 331–341 (LTEKIKKIKVV) serves as a coordination point for heparin. The EGF-like 2 domain occupies 383–415 (RIYFCQIPCLNGGRCIGRDECWCPANSTGKFCH). Intrachain disulfides connect C387–C397, C391–C403, and C405–C414. N408 carries N-linked (GlcNAc...) asparagine glycosylation. Positions 484–529 (EVDPVPEDNSVETRASHRPHGSSGHSHWASNSIPARAGEAPRPPPV) are disordered. The residue at position 493 (S493) is a Phosphoserine. Residues 538 to 590 (GQCYLSTVNGQCANPLGELTSQEDCCGSVGTSWGVTSCAPCPPRPAFPVIENG) enclose the TB 1 domain. Intrachain disulfides connect C540-C562, C549-C575, and C563-C578. N602 carries N-linked (GlcNAc...) asparagine glycosylation. Residues 608–648 (DINECLTLGLCKDSECVNTRGSYLCTCRPGLMLDPSRSRCV) form the EGF-like 3; calcium-binding domain. Intrachain disulfides connect C612–C623, C618–C632, C634–C647, C660–C682, C669–C695, C683–C698, and C684–C710. The region spanning 658 to 710 (GLCYRSMVSGTCTLPLVQRITKQICCCSRVGKAWGSKCEHCPLPGTEAFREIC) is the TB 2 domain. Disordered stretches follow at residues 729–759 (KAEE…RQPL) and 786–809 (SAPH…LPGQ). Residues 834 to 876 (GFDPCFAGASNICGPGTCVKLPNGYRCVCSPGYQLHPSQDYCT) form the EGF-like 4 domain. 45 cysteine pairs are disulfide-bonded: C838/C851, C846/C860, C862/C875, C881/C892, C886/C901, C903/C918, C924/C935, C930/C944, C946/C958, C964/C975, C970/C984, C987/C998, C1004/C1015, C1010/C1024, C1026/C1039, C1045/C1056, C1051/C1065, C1068/C1081, C1087/C1098, C1093/C1107, C1110/C1123, C1129/C1141, C1136/C1150, C1152/C1164, C1170/C1182, C1176/C1191, C1193/C1206, C1212/C1223, C1218/C1232, C1234/C1247, C1253/C1265, C1259/C1274, C1276/C1289, C1295/C1307, C1302/C1316, C1318/C1332, C1359/C1382, C1369/C1394, C1383/C1397, C1435/C1448, C1443/C1457, C1459/C1472, C1478/C1488, C1483/C1497, and C1499/C1512. The EGF-like 5; calcium-binding domain occupies 877–919 (DDNECLRNPCEGRGRCVNSVGSYSCLCYPGYTLATLGDTQECQ). In terms of domain architecture, EGF-like 6; calcium-binding spans 920-959 (DVDECEQPGVCSGGRCSNTEGSYHCECDQGYVMVRRGHCQ). Residues 960–999 (DINECRHPGTCPDGRCVNSPGSYTCLACEEGYIGQSGNCV) enclose the EGF-like 7; calcium-binding domain. The EGF-like 8; calcium-binding domain maps to 1000–1040 (DMNECLTPGICAHGRCINMEGSFRCSCEPGYELTPDKKGCR). The 42-residue stretch at 1041–1082 (DVDECASRASCPTGLCLNTEGSFTCSACQSGYWVNEDGTACE) folds into the EGF-like 9; calcium-binding domain. Positions 1083–1124 (DLDECAFPGVCPTGVCTNTVGSFSCKDCDRGFRPSPLGNSCE) constitute an EGF-like 10; calcium-binding domain. The EGF-like 11; calcium-binding domain occupies 1125–1165 (DVDECEGPQNSCLGGECKNTDGSYQCLCPQGFQLANGTVCE). A glycan (N-linked (GlcNAc...) asparagine) is linked at N1160. Residues 1166 to 1207 (DVDECVGEEHCAPHGECLNSPGSFFCLCAPGFASAEGGTRCQ) enclose the EGF-like 12; calcium-binding domain. Residues 1208–1248 (DVDECATTEPCLGGHCVNTEGSFNCLCETGFQPAPDSGECV) form the EGF-like 13; calcium-binding domain. The EGF-like 15; calcium-binding domain maps to 1249 to 1290 (DIDECANDTVCGNHGFCDNTDGSFRCLCDQGFETSPSGWECV). N1255 carries N-linked (GlcNAc...) asparagine glycosylation. One can recognise an EGF-like 16; calcium-binding domain in the interval 1291-1333 (DVNECELMLAVCGDALCENVEGSFLCLCASDLEEYDAEEGHCR). The region spanning 1357–1409 (MECYAEHNGGPPCSQILGQNSTQAECCSTQGARWGETCDPCPSEDSVEFSELC) is the TB 3 domain. N1376 is a glycosylation site (N-linked (GlcNAc...) asparagine). In terms of domain architecture, EGF-like 17; calcium-binding spans 1431–1473 (DADECILFGPALCQNGRCLNTVPGYICLCNPGYHYDAVSRKCQ). In terms of domain architecture, EGF-like 18; calcium-binding spans 1474–1513 (DHNECQDLACENGECVNTEGSFHCFCSPPLILDLSGQRCV). The N-linked (GlcNAc...) asparagine glycan is linked to N1514. One can recognise a TB 4 domain in the interval 1530–1582 (DICWKKVTNDVCSQPLRGHHTTYTECCCQDGEAWSQQCALCPPRSSEVYAQLC). 10 disulfides stabilise this stretch: C1532–C1555, C1541–C1567, C1556–C1570, C1557–C1582, C1680–C1691, C1686–C1700, C1702–C1715, C1721–C1736, C1731–C1745, and C1747–C1760. The interval 1585–1764 (ARIEAEREAG…PGPPHCAAKE (180 aa)) is C-terminal domain. The EGF-like 19; calcium-binding domain occupies 1676–1716 (QAEECGILNGCENGRCVRVREGYTCDCFEGFQLDTALMACV). Residues 1717 to 1761 (DVNECEDLNGAARLCAHGHCENTEGSYRCHCSPGYVAEPGPPHCA) enclose the EGF-like 20; calcium-binding domain.

The protein belongs to the LTBP family. In terms of assembly, forms part of the large latent transforming growth factor beta precursor complex; removal is essential for activation of complex. Interacts with SDC4. Interacts (via C-terminal domain) with FBN1 (via N-terminal domain) in a Ca(+2)-dependent manner. In terms of processing, N-Glycosylated. Contains hydroxylated asparagine residues. As to expression, expressed in cortical astrocytes and glioma cells. Expression is up-regulated by TGFB1.

Its subcellular location is the secreted. It localises to the extracellular space. The protein localises to the extracellular matrix. Its function is as follows. May play an integral structural role in elastic-fiber architectural organization and/or assembly. The polypeptide is Latent-transforming growth factor beta-binding protein 2 (Ltbp2) (Rattus norvegicus (Rat)).